The chain runs to 148 residues: Cdc42 effector protein 5 (148 aa).

Disordered stretches follow at residues 1–89 (MPVL…DPLL) and 111–148 (RPEA…VIGL). In terms of domain architecture, CRIB spans 23-37 (ISAPLGDFRHTLHVG). Position 38 is an omega-N-methylarginine (Arg38). Residues 55 to 76 (GPPPEPRAPPAGAPRSPPPPAV) are compositionally biased toward pro residues. Residues 77–87 (PQSAAPSPADP) are compositionally biased toward low complexity.

Belongs to the BORG/CEP family. In terms of assembly, interacts with CDC42, in a GTP-dependent manner, and with SEPT7.

It is found in the endomembrane system. Its subcellular location is the cytoplasm. It localises to the cytoskeleton. Probably involved in the organization of the actin cytoskeleton. May act downstream of CDC42 to induce actin filament assembly leading to cell shape changes. Induces pseudopodia formation in fibroblasts. Inhibits MAPK8 independently of CDC42 binding. Controls septin organization and this effect is negatively regulated by CDC42. The protein is Cdc42 effector protein 5 (CDC42EP5) of Homo sapiens (Human).